The chain runs to 296 residues: Mycothiol acetyltransferase (296 aa).

2 consecutive N-acetyltransferase domains span residues Tyr17–Asp146 and Leu156–Lys296. Position 44 (Glu44) interacts with 1D-myo-inositol 2-(L-cysteinylamino)-2-deoxy-alpha-D-glucopyranoside. Leu81–Val83 contributes to the acetyl-CoA binding site. Residues Glu183, Lys222, and Glu230 each coordinate 1D-myo-inositol 2-(L-cysteinylamino)-2-deoxy-alpha-D-glucopyranoside. Residues Val234–Leu236 and Arg241–Asp247 contribute to the acetyl-CoA site. Tyr268 is a 1D-myo-inositol 2-(L-cysteinylamino)-2-deoxy-alpha-D-glucopyranoside binding site.

The protein belongs to the acetyltransferase family. MshD subfamily. In terms of assembly, monomer.

The catalysed reaction is 1D-myo-inositol 2-(L-cysteinylamino)-2-deoxy-alpha-D-glucopyranoside + acetyl-CoA = mycothiol + CoA + H(+). Catalyzes the transfer of acetyl from acetyl-CoA to desacetylmycothiol (Cys-GlcN-Ins) to form mycothiol. The polypeptide is Mycothiol acetyltransferase (Corynebacterium efficiens (strain DSM 44549 / YS-314 / AJ 12310 / JCM 11189 / NBRC 100395)).